The chain runs to 1034 residues: Teashirt homolog 2 (1034 aa).

The segment at 1 to 90 (MPRRKQQAPK…NESLLSDASD (90 aa)) is disordered. A coiled-coil region spans residues 13 to 38 (AGYAQEEQLKEEEEIKEEEEEEDSGS). Residues 21-36 (LKEEEEIKEEEEEEDS) are compositionally biased toward acidic residues. The span at 65–90 (SYQNSPGSHLSNQDAENESLLSDASD) shows a compositional bias: polar residues. Residue Lys188 forms a Glycyl lysine isopeptide (Lys-Gly) (interchain with G-Cter in SUMO2) linkage. C2H2-type zinc fingers lie at residues 215-239 (FRCRQCSAAYDTLVELTVHMNETGH) and 275-299 (LKCMFCGDSFDSLQDLSVHMIKTKH). Residues 239–265 (HYQDDNRKKDKLRPTSYSKPRKRAFQD) are disordered. Glycyl lysine isopeptide (Lys-Gly) (interchain with G-Cter in SUMO2) cross-links involve residues Lys306 and Lys315. Residues 380–404 (LKCMECGSSHDTLQQLTTHMMVTGH) form a C2H2-type 3; atypical zinc finger. Residue Lys417 forms a Glycyl lysine isopeptide (Lys-Gly) (interchain with G-Cter in SUMO2) linkage. The span at 432-455 (LSEAPNSDSLAPKPSSNSASDCTA) shows a compositional bias: polar residues. The segment at 432–496 (LSEAPNSDSL…PLQKPLDPTI (65 aa)) is disordered. A compositionally biased stretch (basic and acidic residues) spans 459-482 (ELKKESKKERPEETSKDEKVVKSE). Residues Lys461, Lys480, Lys497, Lys601, and Lys652 each participate in a glycyl lysine isopeptide (Lys-Gly) (interchain with G-Cter in SUMO2) cross-link. Disordered regions lie at residues 598 to 676 (TQVK…TSAL) and 763 to 789 (QPIDLTKSKSKKAESSQAQSCMSPPQK). Residues 600-668 (VKKESEDKDE…KEGSEKEKPQ (69 aa)) show a composition bias toward basic and acidic residues. Residues Lys800 and Lys820 each participate in a glycyl lysine isopeptide (Lys-Gly) (interchain with G-Cter in SUMO2) cross-link. Positions 841–911 (RKGRQSNWNP…NVKYQLRKTG (71 aa)) form a DNA-binding region, homeobox; atypical. The C2H2-type 4 zinc finger occupies 926-948 (FYCSDCASQFRTPSTYISHLESH). Lys966 participates in a covalent cross-link: Glycyl lysine isopeptide (Lys-Gly) (interchain with G-Cter in SUMO2). A Phosphoserine modification is found at Ser980. Residues 994–1017 (FKCKLCCRTFVSKHAVKLHLSKTH) form a C2H2-type 5 zinc finger. A disordered region spans residues 1014–1034 (SKTHSKSPEHHSQFVTDVDEE).

The protein belongs to the teashirt C2H2-type zinc-finger protein family. As to quaternary structure, interacts (via homeobox domain) with APBB1 (via PID domain 1). In terms of processing, sumoylated. Expressed in brain; strongly reduced in post-mortem elderly subjects with Alzheimer disease.

The protein localises to the nucleus. Probable transcriptional regulator involved in developmental processes. May act as a transcriptional repressor (Potential). This chain is Teashirt homolog 2 (TSHZ2), found in Homo sapiens (Human).